We begin with the raw amino-acid sequence, 156 residues long: Small ribosomal subunit protein uS7 (156 aa).

It belongs to the universal ribosomal protein uS7 family. In terms of assembly, part of the 30S ribosomal subunit. Contacts proteins S9 and S11.

In terms of biological role, one of the primary rRNA binding proteins, it binds directly to 16S rRNA where it nucleates assembly of the head domain of the 30S subunit. Is located at the subunit interface close to the decoding center, probably blocks exit of the E-site tRNA. The polypeptide is Small ribosomal subunit protein uS7 (Shewanella frigidimarina (strain NCIMB 400)).